The following is a 198-amino-acid chain: MDIENLNQIPIVVEQSARGERAYDIYSRLLKERIIFLVGPIEDYMANVVVAQLLFLESENPDQDIHLYINSPGGLVSAGLAIYDTMQFIKPDVSTLCIGQAASMGALLLTAGAKDKRFALPNVRCMIHQPLGGFSGQASDIDIHAQEILKVREKLNQIFKLHTSQTIKTIQKDTDRDNFMSANEATKYGLIDKVLAKR.

Serine 103 (nucleophile) is an active-site residue. Residue histidine 128 is part of the active site.

It belongs to the peptidase S14 family. Fourteen ClpP subunits assemble into 2 heptameric rings which stack back to back to give a disk-like structure with a central cavity, resembling the structure of eukaryotic proteasomes.

The protein localises to the cytoplasm. The catalysed reaction is Hydrolysis of proteins to small peptides in the presence of ATP and magnesium. alpha-casein is the usual test substrate. In the absence of ATP, only oligopeptides shorter than five residues are hydrolyzed (such as succinyl-Leu-Tyr-|-NHMec, and Leu-Tyr-Leu-|-Tyr-Trp, in which cleavage of the -Tyr-|-Leu- and -Tyr-|-Trp bonds also occurs).. Cleaves peptides in various proteins in a process that requires ATP hydrolysis. Has a chymotrypsin-like activity. Plays a major role in the degradation of misfolded proteins. The chain is ATP-dependent Clp protease proteolytic subunit from Ruthia magnifica subsp. Calyptogena magnifica.